The primary structure comprises 433 residues: 23S rRNA (uracil(1939)-C(5))-methyltransferase RlmD (433 aa).

The TRAM domain occupies 10 to 68; the sequence is RTTTRQIITVSVNDLDSFGQGVARHNGKTLFIPGLLPQENAEVTVTEDKKQYARAKVVR. Positions 81, 87, 90, and 162 each coordinate [4Fe-4S] cluster. Residues glutamine 265, phenylalanine 294, asparagine 299, glutamate 315, asparagine 342, and aspartate 363 each contribute to the S-adenosyl-L-methionine site. Catalysis depends on cysteine 389, which acts as the Nucleophile.

The protein belongs to the class I-like SAM-binding methyltransferase superfamily. RNA M5U methyltransferase family. RlmD subfamily.

It carries out the reaction uridine(1939) in 23S rRNA + S-adenosyl-L-methionine = 5-methyluridine(1939) in 23S rRNA + S-adenosyl-L-homocysteine + H(+). Catalyzes the formation of 5-methyl-uridine at position 1939 (m5U1939) in 23S rRNA. This chain is 23S rRNA (uracil(1939)-C(5))-methyltransferase RlmD, found in Shigella sonnei (strain Ss046).